The sequence spans 158 residues: Cyclic pyranopterin monophosphate synthase (158 aa).

Substrate-binding positions include 76-78 (LCH) and 114-115 (ME). Asp-129 is an active-site residue.

The protein belongs to the MoaC family. In terms of assembly, homohexamer; trimer of dimers.

It carries out the reaction (8S)-3',8-cyclo-7,8-dihydroguanosine 5'-triphosphate = cyclic pyranopterin phosphate + diphosphate. It participates in cofactor biosynthesis; molybdopterin biosynthesis. Functionally, catalyzes the conversion of (8S)-3',8-cyclo-7,8-dihydroguanosine 5'-triphosphate to cyclic pyranopterin monophosphate (cPMP). The polypeptide is Cyclic pyranopterin monophosphate synthase (Shewanella frigidimarina (strain NCIMB 400)).